Consider the following 162-residue polypeptide: UPF0305 protein MmarC7_1691 (162 aa).

The protein belongs to the UPF0305 family.

This chain is UPF0305 protein MmarC7_1691, found in Methanococcus maripaludis (strain C7 / ATCC BAA-1331).